Consider the following 397-residue polypeptide: Ethanolaminephosphotransferase 1 (397 aa).

At alanine 2 the chain carries N-acetylalanine. A run of 10 helical transmembrane segments spans residues 47–69, 84–103, 123–145, 150–172, 179–201, 221–243, 256–278, 291–310, 317–339, and 344–366; these read WLAPNLITFSGFLLVVFNFLLMA, HVPDWVWIVVGILNFVAYTL, LFDHGLDSWSCVYFVVTVYSIFG, GVSVFVLYLLLWVVLFSFILSHW, ILFLPWGYDISQVTISFVYIVTA, LFTAMIIGCALCVTLPMSLLNFF, VYEAMVPLFSPCLLFILSTAWIL, VFYFMVGTAFANSTCQLIVC, CPTLNWLLVPLFLVVLVVNLGVA, and SILLYTLTTAFTLAHIHYGVRVV. Selenocysteine 387 is a non-standard amino acid (selenocysteine).

The protein belongs to the CDP-alcohol phosphatidyltransferase class-I family. It depends on Mg(2+) as a cofactor. The cofactor is Mn(2+). In terms of tissue distribution, widely expressed. Abundant in brain, placenta, liver and pancreas, followed by heart, skeletal muscle, lung and kidney. In brain it is strongly expressed in cerebellum, followed by the occipital pole and the frontal lobe.

The protein localises to the endoplasmic reticulum membrane. The catalysed reaction is CDP-ethanolamine + a 1,2-diacyl-sn-glycerol = a 1,2-diacyl-sn-glycero-3-phosphoethanolamine + CMP + H(+). It carries out the reaction 1-O-alkyl-2-acyl-sn-glycerol + CDP-ethanolamine = a 1-O-alkyl-2-acyl-sn-glycero-3-phosphoethanolamine + CMP + H(+). It functions in the pathway phospholipid metabolism; phosphatidylethanolamine biosynthesis; phosphatidylethanolamine from ethanolamine: step 3/3. In terms of biological role, ethanolaminephosphotransferase that catalyzes the transfer of phosphoethanolamine (PE) from CDP-ethanolamine to lipid acceptors, the final step in the synthesis of PE via the 'Kennedy' pathway. PE is the second most abundant phospholipid of membranes in mammals and is involved in various membrane-related cellular processes. The enzyme is critical for the synthesis of several PE species and also catalyzes the synthesis of plasmanyl-PE, a lipid required for proper myelination and neurodevelopment, from 1-alkyl-2-acylglycerol. This Homo sapiens (Human) protein is Ethanolaminephosphotransferase 1.